Here is a 283-residue protein sequence, read N- to C-terminus: Phosphatidylserine decarboxylase proenzyme (283 aa).

Residues Asp-90, His-143, and Ser-248 each act as charge relay system; for autoendoproteolytic cleavage activity in the active site. The Schiff-base intermediate with substrate; via pyruvic acid; for decarboxylase activity role is filled by Ser-248. The residue at position 248 (Ser-248) is a Pyruvic acid (Ser); by autocatalysis.

The protein belongs to the phosphatidylserine decarboxylase family. PSD-B subfamily. Prokaryotic type I sub-subfamily. Heterodimer of a large membrane-associated beta subunit and a small pyruvoyl-containing alpha subunit. Pyruvate serves as cofactor. In terms of processing, is synthesized initially as an inactive proenzyme. Formation of the active enzyme involves a self-maturation process in which the active site pyruvoyl group is generated from an internal serine residue via an autocatalytic post-translational modification. Two non-identical subunits are generated from the proenzyme in this reaction, and the pyruvate is formed at the N-terminus of the alpha chain, which is derived from the carboxyl end of the proenzyme. The autoendoproteolytic cleavage occurs by a canonical serine protease mechanism, in which the side chain hydroxyl group of the serine supplies its oxygen atom to form the C-terminus of the beta chain, while the remainder of the serine residue undergoes an oxidative deamination to produce ammonia and the pyruvoyl prosthetic group on the alpha chain. During this reaction, the Ser that is part of the protease active site of the proenzyme becomes the pyruvoyl prosthetic group, which constitutes an essential element of the active site of the mature decarboxylase.

The protein localises to the cell membrane. It catalyses the reaction a 1,2-diacyl-sn-glycero-3-phospho-L-serine + H(+) = a 1,2-diacyl-sn-glycero-3-phosphoethanolamine + CO2. It functions in the pathway phospholipid metabolism; phosphatidylethanolamine biosynthesis; phosphatidylethanolamine from CDP-diacylglycerol: step 2/2. In terms of biological role, catalyzes the formation of phosphatidylethanolamine (PtdEtn) from phosphatidylserine (PtdSer). The polypeptide is Phosphatidylserine decarboxylase proenzyme (Francisella tularensis subsp. novicida (strain U112)).